The following is a 149-amino-acid chain: L-alanine exporter AlaE (149 aa).

The next 4 membrane-spanning stretches (helical) occupy residues 17–37 (FAMV…ISGM), 43–63 (LASR…YGVF), 86–106 (LTAY…TVGA), and 111–131 (IITA…FYGY).

The protein belongs to the AlaE exporter family.

It is found in the cell inner membrane. Its function is as follows. Exports L-alanine. This is L-alanine exporter AlaE from Aliivibrio salmonicida (strain LFI1238) (Vibrio salmonicida (strain LFI1238)).